Reading from the N-terminus, the 357-residue chain is MKVLAALALSALAMAKPTPPMPGMSLVQTGPQETRWVTAKEKHDMVMNHIGFFDITNRPETASIASKPKSYAFPGNVSHQAEVKPLLEKISADHIKANLEKFSSYPNRYYDAQSGVESAQWVMEQAQAVVGNIQGAKVEMVKHDWMQPSIRAIIPGKSEKIVAVGAHQDSINGNNPQGEAPGADDNGSGSMTILEALTALVSDQKIAGGEAANTLEFHWYAGEEEGLLGSQDIFQQYSQEGKEVVAMLNQDMTGYGETMGVITDNSDPNLTKFTKMILDTYTSAKYSDSECGYACSDHASANKAGFPSAFVYEAVVGQDNPAIHSPDDTIEKLDPAKMAEHAKLVVGFAYELAFATL.

The signal sequence occupies residues 1-15; the sequence is MKVLAALALSALAMA. An N-linked (GlcNAc...) asparagine glycan is attached at Asn76. Zn(2+) is bound by residues His167 and Asp185. Positions 169 to 188 are disordered; it reads DSINGNNPQGEAPGADDNGS. An N-linked (GlcNAc...) asparagine glycan is attached at Asn186. Positions 224 and 251 each coordinate Zn(2+). A glycan (N-linked (GlcNAc...) asparagine) is linked at Asn269. A disulfide bond links Cys291 and Cys295. Zn(2+) is bound at residue His324.

This sequence belongs to the peptidase M28 family. M28E subfamily. As to quaternary structure, monomer. Zn(2+) serves as cofactor.

Its subcellular location is the secreted. Functionally, probable extracellular aminopeptidase which contributes to pathogenicity. In Arthroderma benhamiae (strain ATCC MYA-4681 / CBS 112371) (Trichophyton mentagrophytes), this protein is Probable leucine aminopeptidase ARB_00576.